The primary structure comprises 289 residues: Trihelix transcription factor GT-3b (289 aa).

A Myb-like domain is found at 42 to 98 (WSVEETKELIGIRGELDQTFMETKRNKLLWEVISNKMRDKSFPRSPEQCKCKWKNLV). The Bipartite nuclear localization signal signature appears at 65 to 81 (KRNKLLWEVISNKMRDK). The disordered stretch occupies residues 137 to 200 (ESEGGGGGTS…SNSSNSNNGV (64 aa)). A compositionally biased stretch (acidic residues) spans 156 to 168 (SDEEEENVNEELV). A Nuclear localization signal motif is present at residues 179 to 188 (PKKNIAKKRK). Residues 190–199 (GSNSSNSNNG) show a composition bias toward low complexity. A coiled-coil region spans residues 223–275 (EAREKERAEKEEEWRRKMEELEKERLAMERMWRDREEQRRSREEMRAEKRDSL).

Heterodimer with GT-3A. Associated with the mediator complex.

It localises to the nucleus. In terms of biological role, probable transcription factor that may play a role in the induction of CAM4 in response to pathogen and salt. The sequence is that of Trihelix transcription factor GT-3b (GT-3B) from Arabidopsis thaliana (Mouse-ear cress).